Reading from the N-terminus, the 350-residue chain is Inhibin beta E chain (350 aa).

Positions 1-19 are cleaved as a signal peptide; the sequence is MRLPDVQLWLVLLWALVRA. The propeptide occupies 20–236; it reads QGTGSVCPSC…EPGAGRARRR (217 aa). Residue N198 is glycosylated (N-linked (GlcNAc...) asparagine). 4 cysteine pairs are disulfide-bonded: C240-C248, C247-C315, C276-C347, and C280-C349.

It belongs to the TGF-beta family. In terms of assembly, homodimeric or heterodimeric through association with alpha and beta subunits, linked by one or more disulfide bonds. Inhibins are heterodimers of one alpha and one beta subunit. Activins are homo- or heterodimers of beta subunits only.

Its subcellular location is the secreted. Inhibins and activins inhibit and activate, respectively, the secretion of follitropin by the pituitary gland. Inhibins/activins are involved in regulating a number of diverse functions such as hypothalamic and pituitary hormone secretion, gonadal hormone secretion, germ cell development and maturation, erythroid differentiation, insulin secretion, nerve cell survival, embryonic axial development or bone growth, depending on their subunit composition. Inhibins appear to oppose the functions of activins. Its function is as follows. Activin E is a homodimer of INHBE secreted by the liver that plays a crucial role in regulating metabolic homeostasis particularly in lipid metabolism and energy homeostasis. Plays a central role in the regulation of adipose tissue lipolysis by preventing the influx of fatty acids from adipose tissue into the liver. Mechanistically, signals via ACVR1C to activate SMAD2/3 signaling, suppressing PPARG target genes in adipose tissue, thereby reducing liver lipid content and improving glycemic control. Induces beige adipocyte formation and thermogenesis in response to cold exposure. The sequence is that of Inhibin beta E chain (INHBE) from Homo sapiens (Human).